The primary structure comprises 646 residues: Lamin-1 (646 aa).

The interval 1–85 (MAEKAGEAGV…GSRATSPTSF (85 aa)) is head. The segment at 1-94 (MAEKAGEAGV…FSRAQEKEEL (94 aa)) is disordered. Composition is skewed to polar residues over residues 48 to 67 (ATPS…SMSL) and 75 to 87 (QGSR…SFSR). Residues 86–126 (SRAQEKEELQNLNDRLAKILNKLNDSEEENRTLKIRLTTVQ) are coil 1A. The 357-residue stretch at 90-446 (EKEELQNLND…KLLSDEEIRL (357 aa)) folds into the IF rod domain. Positions 127–137 (QETSADLNDQI) are linker 1. Residues 138 to 281 (GKYRDELERA…SKLQRQSLSV (144 aa)) form a coil 1B region. Over residues 281–301 (VTTVDHHSAQSTSRRSGSDFS) the composition is skewed to polar residues. The interval 281–304 (VTTVDHHSAQSTSRRSGSDFSASV) is disordered. The interval 282 to 299 (TTVDHHSAQSTSRRSGSD) is linker 2. Residues 300–439 (FSASVEDMRS…TELEMYNKLL (140 aa)) are coil 2. The tract at residues 440 to 646 (SDEEIRLGIT…GKGILGFFGL (207 aa)) is tail. Residues 457–471 (VRHGAKKRKLTETFY) carry the Nuclear localization signal motif. Residues 476 to 487 (GSRSSAGSRSAG) are compositionally biased toward low complexity. A disordered region spans residues 476 to 513 (GSRSSAGSRSAGHNSTPVTKSQVTRTTVKTSENKSKAS). Polar residues predominate over residues 488–505 (HNSTPVTKSQVTRTTVKT). An LTD domain is found at 504–618 (KTSENKSKAS…NQMATYEVSA (115 aa)).

Belongs to the intermediate filament family.

It is found in the nucleus. Intermediate filament (IF) protein, component of the nuclear lamina, a fibrous layer on the nucleoplasmic side of the inner nuclear membrane, which is thought to provide a framework for the nuclear envelope. The chain is Lamin-1 from Hypsibius exemplaris (Freshwater tardigrade).